The primary structure comprises 512 residues: Cytochrome P450 72A13 (512 aa).

Residues 2–22 (EISVASVTVSVAVVVVSWWVW) traverse the membrane as a helical segment. Position 460 (Cys460) interacts with heme.

Belongs to the cytochrome P450 family. It depends on heme as a cofactor.

It localises to the membrane. This is Cytochrome P450 72A13 (CYP72A13) from Arabidopsis thaliana (Mouse-ear cress).